The primary structure comprises 398 residues: Cell adhesion molecule 3 (398 aa).

Residues 1 to 24 form the signal peptide; it reads MGAPAASLLLLLLLFACCWAPGGA. In terms of domain architecture, Ig-like V-type spans 25-126; that stretch reads NLSQDDSQPW…VRTAKSLVTV (102 aa). Over 25-330 the chain is Extracellular; the sequence is NLSQDDSQPW…PVPSSSSTYH (306 aa). Disulfide bonds link Cys-50–Cys-110, Cys-152–Cys-209, and Cys-254–Cys-299. Ig-like C2-type domains are found at residues 130–228 and 233–315; these read PQKP…QRIE and PTAM…YTLN. N-linked (GlcNAc...) asparagine glycosylation occurs at Asn-290. A helical membrane pass occupies residues 331–351; the sequence is AIIGGIVAFIVFLLLIMLIFL. Residues 352–398 are Cytoplasmic-facing; it reads GHYLIRHKGTYLTHEAKGSDDAPDADTAIINAEGGQSGGDDKKEYFI. A disordered region spans residues 367-398; sequence AKGSDDAPDADTAIINAEGGQSGGDDKKEYFI. Phosphoserine is present on Ser-388.

Belongs to the nectin family. In terms of assembly, homodimer. Can form trans-heterodimers with NECTIN3. Interacts with EPB41L1, DLG3, PALS2 and CASK. In terms of tissue distribution, isoform 1 is expressed mainly in adult and fetal brain. Isoform 2 is highly expressed in adult brain and weakly expressed in placenta. In brain, Isoform 2 is highly expressed in cerebellum.

It localises to the cell membrane. Its subcellular location is the cell junction. In terms of biological role, involved in cell-cell adhesion. Has both calcium-independent homophilic cell-cell adhesion activity and calcium-independent heterophilic cell-cell adhesion activity with IGSF4, NECTIN1 and NECTIN3. Interaction with EPB41L1 may regulate structure or function of cell-cell junctions. This is Cell adhesion molecule 3 (CADM3) from Homo sapiens (Human).